The primary structure comprises 435 residues: Enolase (435 aa).

Q163 is a (2R)-2-phosphoglycerate binding site. E205 (proton donor) is an active-site residue. Residues D243, E292, and D319 each coordinate Mg(2+). (2R)-2-phosphoglycerate is bound by residues K344, R373, S374, and K395. K344 functions as the Proton acceptor in the catalytic mechanism.

The protein belongs to the enolase family. Mg(2+) serves as cofactor.

It localises to the cytoplasm. It is found in the secreted. The protein localises to the cell surface. It carries out the reaction (2R)-2-phosphoglycerate = phosphoenolpyruvate + H2O. It functions in the pathway carbohydrate degradation; glycolysis; pyruvate from D-glyceraldehyde 3-phosphate: step 4/5. Its function is as follows. Catalyzes the reversible conversion of 2-phosphoglycerate (2-PG) into phosphoenolpyruvate (PEP). It is essential for the degradation of carbohydrates via glycolysis. The chain is Enolase from Streptococcus suis (strain 98HAH33).